We begin with the raw amino-acid sequence, 81 residues long: Cytochrome c oxidase subunit 7A1, mitochondrial (81 aa).

The N-terminal 21 residues, 1-21 (MRHLLGLPQLASRAFSTTVRQ), are a transit peptide targeting the mitochondrion. Residues 51–72 (ILYRLTMTLTVVGTGYSLYWLL) form a helical membrane-spanning segment.

The protein belongs to the cytochrome c oxidase VIIa family. As to quaternary structure, component of the complex IV (CIV, cytochrome c oxidase). The complex exists as a monomer or a dimer and forms supercomplexes (SCs) in the inner mitochondrial membrane with NADH-ubiquinone oxidoreductase (complex I, CI) and ubiquinol-cytochrome c oxidoreductase (cytochrome b-c1 complex, complex III, CIII), resulting in different assemblies (supercomplex SCI(1)III(2)IV(1) and megacomplex MCI(2)III(2)IV(2)).

It localises to the mitochondrion inner membrane. The protein operates within energy metabolism; oxidative phosphorylation. Its function is as follows. Component of the mitochondrial respiratory complex IV (CIV, also named cytochrome c oxidase complex), the last enzyme in the mitochondrial electron transport chain which drives oxidative phosphorylation. The CIV complex is the component of the respiratory chain that catalyzes the reduction of oxygen to water. Acts as an assembly factor that specifically drives the homodimerization of CIV complexes, mediating the formation of mitochondrial respiratory supercomplexes (respirasomes) containing two CIV: supercomplxes with two molecules of CIV show improved activity. The sequence is that of Cytochrome c oxidase subunit 7A1, mitochondrial from Danio rerio (Zebrafish).